Here is a 408-residue protein sequence, read N- to C-terminus: 4-O-methyl-glucuronoyl methylesterase 1 (408 aa).

The first 19 residues, 1 to 19 (MASSSRFAALLLLALPALA), serve as a signal peptide directing secretion. 3 cysteine pairs are disulfide-bonded: Cys31-Cys65, Cys218-Cys354, and Cys250-Cys326. The GXSYXG catalytic site motif motif lies at 217–222 (GCSRDG). The Nucleophile role is filled by Ser219. Positions 223, 265, and 273 each coordinate substrate. Asn287 carries N-linked (GlcNAc...) asparagine glycosylation. Trp317 serves as a coordination point for substrate. The N-linked (GlcNAc...) asparagine glycan is linked to Asn350. The active-site Proton donor/acceptor is His353. Residues Asn390, Asn395, and Asn401 are each glycosylated (N-linked (GlcNAc...) asparagine).

This sequence belongs to the carbohydrate esterase 15 (CE15) family.

The protein resides in the secreted. The catalysed reaction is a 4-O-methyl-alpha-D-glucuronosyl ester derivative + H2O = 4-O-methyl-alpha-D-glucuronate derivative + an alcohol + H(+). Functionally, glucuronoyl esterase which may play a significant role in biomass degradation, as it is considered to disconnect hemicellulose from lignin through the hydrolysis of the ester bond between 4-O-methyl-D-glucuronic acid residues of glucuronoxylans and aromatic alcohols of lignin. Can hydrolyze benzyl glucuronic acid (BnGlcA), allyl glucuronic acid (allylGlcA) and to a lower degree methyl glucuronic acid (MeGlcA) in vitro. This Wolfiporia cocos (strain MD-104) (Brown rot fungus) protein is 4-O-methyl-glucuronoyl methylesterase 1.